The primary structure comprises 347 residues: MVNVGVLGATGMVGQRFIQMLDKHPEFELTTLAASSRSAGKPYGEVANWYLDCEMPESVRDMEVVETDPSAVGDVDILFSALPADVARKVEPKFAEKYIVASNASAMRMEPDVPLVIPEVNPEFLDLIEVQQRRRGWDGFIVTNPNCSTIALTLTLKPIYDAYTIKRVYVSTMQAVSGAGYNGVPSMAILDNLVPFIGGEEEKIETETLHLLGELDEGVVKPASFGVSASCHRVPVVDGHTEAVFIELDDEFDIDDVREAMDKFRGLPQKLGLHSAPEKPVVVRDEENRPQPRMDRDMDGGMAVTVGRLREDAAFKNSLRYVLVGHNTVRGAAGASILNAELINEIL.

Residues 10-13 (TGMV) and 37-38 (RS) each bind NADP(+). Arg108 is a phosphate binding site. The Acyl-thioester intermediate role is filled by Cys147. Position 174 (Gln174) interacts with substrate. An NADP(+)-binding site is contributed by 177-178 (SG). Glu200 is a binding site for substrate. Residue Lys203 participates in phosphate binding. Arg233 is a substrate binding site. The active-site Proton acceptor is His240. The interval 276–299 (APEKPVVVRDEENRPQPRMDRDMD) is disordered. Residues 281 to 299 (VVVRDEENRPQPRMDRDMD) are compositionally biased toward basic and acidic residues. 327–328 (NT) is a binding site for NADP(+).

It belongs to the aspartate-semialdehyde dehydrogenase family. In terms of assembly, homodimer.

It catalyses the reaction L-aspartate 4-semialdehyde + phosphate + NADP(+) = 4-phospho-L-aspartate + NADPH + H(+). Its pathway is amino-acid biosynthesis; L-lysine biosynthesis via DAP pathway; (S)-tetrahydrodipicolinate from L-aspartate: step 2/4. The protein operates within amino-acid biosynthesis; L-methionine biosynthesis via de novo pathway; L-homoserine from L-aspartate: step 2/3. It participates in amino-acid biosynthesis; L-threonine biosynthesis; L-threonine from L-aspartate: step 2/5. Its function is as follows. Catalyzes the NADPH-dependent formation of L-aspartate-semialdehyde (L-ASA) by the reductive dephosphorylation of L-aspartyl-4-phosphate. In Methanothermobacter thermautotrophicus (strain ATCC 29096 / DSM 1053 / JCM 10044 / NBRC 100330 / Delta H) (Methanobacterium thermoautotrophicum), this protein is Aspartate-semialdehyde dehydrogenase.